Reading from the N-terminus, the 1088-residue chain is Myocardin-related transcription factor B (1088 aa).

Glu22 is subject to Phosphoserine. An RPEL 1 repeat occupies 40-65 (EVLQLRLQQRRTREQLVDQGIMPPLK). Position 66 is a phosphoserine (Ser66). RPEL repeat units lie at residues 84–109 (NFLKHKIRSRPDRSELVRMHILEETF) and 128–153 (DDLNEKIAQRPGPMELVEKNILPVDS). Disordered regions lie at residues 165-310 (EDYP…NEPQ), 349-389 (KPLN…PSSL), 472-508 (AELPPTGTSNATRVENVHSPLPISPSPSEQSSLSTDD), and 528-553 (LSSSPLRMTNNEDSLSPTSSTLSNLE). A compositionally biased stretch (low complexity) spans 197–213 (SAASPSEPKVSESPSPV). Residues 214–226 (TTNTPAQFASVSP) are compositionally biased toward polar residues. Residues 238–248 (ADQPPPRPAAP) are compositionally biased toward pro residues. The span at 272-287 (NPNDKHRSKKCKDPKP) shows a compositional bias: basic and acidic residues. Positions 355–366 (NSNSGNSALNNA) are enriched in low complexity. Phosphothreonine is present on residues Thr367 and Thr370. Over residues 367–378 (TPNTPRQNTSTP) the composition is skewed to polar residues. The SAP domain maps to 389–423 (LDDLKVSELKTELKLRGLPVSGTKPDLIERLKPYQ). The segment covering 528–540 (LSSSPLRMTNNED) has biased composition (polar residues). Phosphoserine is present on residues Ser541 and Ser543. The segment covering 541 to 550 (SLSPTSSTLS) has biased composition (low complexity). Residues 545 to 601 (TSSTLSNLELDAAEKDRKLQEKEKQIEELKRKLEQEQKLVEVLKMQLEVEKRGQQQR) adopt a coiled-coil conformation. The tract at residues 563–591 (LQEKEKQIEELKRKLEQEQKLVEVLKMQL) is required for interaction with itself and with MRTFA. Disordered stretches follow at residues 595–655 (KRGQ…QPVS) and 829–886 (NAPL…STQA). Residue Lys628 forms a Glycyl lysine isopeptide (Lys-Gly) (interchain with G-Cter in SUMO1) linkage. The span at 829–838 (NAPLPSLQNG) shows a compositional bias: polar residues. A compositionally biased stretch (basic and acidic residues) spans 867–879 (KTKDPPRYEEAIK). Residue Ser921 is modified to Phosphoserine.

In terms of assembly, interacts with MRTFA and SRF. In terms of processing, O-glycosylated.

Its subcellular location is the nucleus. Its function is as follows. Acts as a transcriptional coactivator of serum response factor (SRF). Required for skeletal myogenic differentiation. In Homo sapiens (Human), this protein is Myocardin-related transcription factor B.